The chain runs to 103 residues: Nematocin (103 aa).

Residues 1-19 (MGSSPILLVLAISIGLASA) form the signal peptide. Cysteine 20 and cysteine 25 form a disulfide bridge. Tyrosine 30 carries the post-translational modification Tyrosine amide. A propeptide spanning residues 31–103 (GRTIRCSSCG…QGGCQTSAMC (73 aa)) is cleaved from the precursor.

It belongs to the vasopressin/oxytocin family. Detected in thermosensory AFD neurons, neurosecretory NSM cells, AVK interneurons, pharyngeal neuron M5, and the mechanosensory DVA neuron. Detected in male-specific CP motor neurons.

Its subcellular location is the secreted. Functionally, ligand for the G-protein coupled receptor ntr-1. Plays a role in gustatory associative learning. Also plays a role in male mating behavior. This Caenorhabditis elegans protein is Nematocin.